A 398-amino-acid chain; its full sequence is Phosphoglycerate kinase (398 aa).

Substrate-binding positions include 22–24 (DFN), R38, 61–64 (HLGR), R120, and R153. Residues K204, E326, and 352 to 355 (GGDT) contribute to the ATP site.

This sequence belongs to the phosphoglycerate kinase family. As to quaternary structure, monomer.

It is found in the cytoplasm. The catalysed reaction is (2R)-3-phosphoglycerate + ATP = (2R)-3-phospho-glyceroyl phosphate + ADP. It functions in the pathway carbohydrate degradation; glycolysis; pyruvate from D-glyceraldehyde 3-phosphate: step 2/5. In Geobacter metallireducens (strain ATCC 53774 / DSM 7210 / GS-15), this protein is Phosphoglycerate kinase.